We begin with the raw amino-acid sequence, 93 residues long: Small ribosomal subunit protein bS16 (93 aa).

Belongs to the bacterial ribosomal protein bS16 family.

The protein is Small ribosomal subunit protein bS16 of Dictyoglomus turgidum (strain DSM 6724 / Z-1310).